We begin with the raw amino-acid sequence, 283 residues long: Formamidopyrimidine-DNA glycosylase (283 aa).

The active-site Schiff-base intermediate with DNA is the Pro-2. Glu-3 (proton donor) is an active-site residue. The active-site Proton donor; for beta-elimination activity is the Lys-61. His-94, Arg-113, and Lys-159 together coordinate DNA. The FPG-type zinc-finger motif lies at 245–279 (DAYGREGESCRRCGAVMRREKFMNRSSFYCPKCQP). The active-site Proton donor; for delta-elimination activity is the Arg-269.

It belongs to the FPG family. In terms of assembly, monomer. Zn(2+) serves as cofactor.

It carries out the reaction Hydrolysis of DNA containing ring-opened 7-methylguanine residues, releasing 2,6-diamino-4-hydroxy-5-(N-methyl)formamidopyrimidine.. The catalysed reaction is 2'-deoxyribonucleotide-(2'-deoxyribose 5'-phosphate)-2'-deoxyribonucleotide-DNA = a 3'-end 2'-deoxyribonucleotide-(2,3-dehydro-2,3-deoxyribose 5'-phosphate)-DNA + a 5'-end 5'-phospho-2'-deoxyribonucleoside-DNA + H(+). In terms of biological role, involved in base excision repair of DNA damaged by oxidation or by mutagenic agents. Acts as a DNA glycosylase that recognizes and removes damaged bases. Has a preference for oxidized purines, such as 7,8-dihydro-8-oxoguanine (8-oxoG). Has AP (apurinic/apyrimidinic) lyase activity and introduces nicks in the DNA strand. Cleaves the DNA backbone by beta-delta elimination to generate a single-strand break at the site of the removed base with both 3'- and 5'-phosphates. This Mycobacterium avium (strain 104) protein is Formamidopyrimidine-DNA glycosylase.